A 171-amino-acid polypeptide reads, in one-letter code: S-ribosylhomocysteine lyase (171 aa).

H54, H58, and C128 together coordinate Fe cation.

It belongs to the LuxS family. As to quaternary structure, homodimer. Fe cation is required as a cofactor.

It carries out the reaction S-(5-deoxy-D-ribos-5-yl)-L-homocysteine = (S)-4,5-dihydroxypentane-2,3-dione + L-homocysteine. Involved in the synthesis of autoinducer 2 (AI-2) which is secreted by bacteria and is used to communicate both the cell density and the metabolic potential of the environment. The regulation of gene expression in response to changes in cell density is called quorum sensing. Catalyzes the transformation of S-ribosylhomocysteine (RHC) to homocysteine (HC) and 4,5-dihydroxy-2,3-pentadione (DPD). The chain is S-ribosylhomocysteine lyase from Escherichia coli O81 (strain ED1a).